The primary structure comprises 142 residues: Small heat shock protein IbpB (142 aa).

A sHSP domain is found at 26–137; that stretch reads SGESQSFPPY…APQRIAINER (112 aa).

Belongs to the small heat shock protein (HSP20) family. In terms of assembly, homodimer. Forms homomultimers of about 100-150 subunits at optimal growth temperatures. Conformation changes to oligomers at high temperatures or high ionic concentrations. The decrease in size of the multimers is accompanied by an increase in chaperone activity.

The protein resides in the cytoplasm. In terms of biological role, associates with aggregated proteins, together with IbpA, to stabilize and protect them from irreversible denaturation and extensive proteolysis during heat shock and oxidative stress. Aggregated proteins bound to the IbpAB complex are more efficiently refolded and reactivated by the ATP-dependent chaperone systems ClpB and DnaK/DnaJ/GrpE. Its activity is ATP-independent. The sequence is that of Small heat shock protein IbpB from Salmonella newport (strain SL254).